A 188-amino-acid polypeptide reads, in one-letter code: Photosystem I assembly protein Ycf4 (188 aa).

Helical transmembrane passes span 26–46 and 70–90; these read IWWG…GLSS and LLFY…TIIL.

Belongs to the Ycf4 family.

It is found in the cellular thylakoid membrane. In terms of biological role, seems to be required for the assembly of the photosystem I complex. This Rippkaea orientalis (strain PCC 8801 / RF-1) (Cyanothece sp. (strain PCC 8801)) protein is Photosystem I assembly protein Ycf4.